Reading from the N-terminus, the 210-residue chain is Leucyl/phenylalanyl-tRNA--protein transferase (210 aa).

It belongs to the L/F-transferase family.

It localises to the cytoplasm. It catalyses the reaction N-terminal L-lysyl-[protein] + L-leucyl-tRNA(Leu) = N-terminal L-leucyl-L-lysyl-[protein] + tRNA(Leu) + H(+). The enzyme catalyses N-terminal L-arginyl-[protein] + L-leucyl-tRNA(Leu) = N-terminal L-leucyl-L-arginyl-[protein] + tRNA(Leu) + H(+). It carries out the reaction L-phenylalanyl-tRNA(Phe) + an N-terminal L-alpha-aminoacyl-[protein] = an N-terminal L-phenylalanyl-L-alpha-aminoacyl-[protein] + tRNA(Phe). Functionally, functions in the N-end rule pathway of protein degradation where it conjugates Leu, Phe and, less efficiently, Met from aminoacyl-tRNAs to the N-termini of proteins containing an N-terminal arginine or lysine. This chain is Leucyl/phenylalanyl-tRNA--protein transferase, found in Roseobacter denitrificans (strain ATCC 33942 / OCh 114) (Erythrobacter sp. (strain OCh 114)).